The sequence spans 375 residues: MKILVDENMPYADQLFQQLGDVQAIPGRPVPEGVLDHADAFMVRSVTKVNEELLKGRAVKFIGTATAGTDHVDQSWLSQAGIGFSAAPGCNAIAVVEYVFSALMLLAERDNFELKDKVVGIVGVGNVGSRLAERLAVLGIRTLLCDPPRADRGDAGEFWSLEKLVKEADILTFHTPLNKSGPYKTHHLVDVELLSVLPDNRILINASRGEVIDNQALLTALKCGKKLRVVLDVWEPEPDLSLPLLELVDIGTPHIAGYTLEGKARGTTQVFEAYCEFLGQPRKVALSDLLPEPDFSRVTLHGNVTQSTLKRLMHLVYDVRRDDTPLRQVAGQKGQFDYLRKNYLERREWSSLTVCCDNRESAELLAALGFSTELI.

Substrate contacts are provided by Ser45 and Thr66. Residues Asp146, Thr175, 206 to 208 (ASR), and Asp232 contribute to the NAD(+) site. Arg208 is an active-site residue. Residue Glu237 is part of the active site. The Proton donor role is filled by His254. An NAD(+)-binding site is contributed by Gly257. Tyr258 contacts substrate.

It belongs to the D-isomer specific 2-hydroxyacid dehydrogenase family. PdxB subfamily. As to quaternary structure, homodimer.

The protein resides in the cytoplasm. The enzyme catalyses 4-phospho-D-erythronate + NAD(+) = (R)-3-hydroxy-2-oxo-4-phosphooxybutanoate + NADH + H(+). It functions in the pathway cofactor biosynthesis; pyridoxine 5'-phosphate biosynthesis; pyridoxine 5'-phosphate from D-erythrose 4-phosphate: step 2/5. Catalyzes the oxidation of erythronate-4-phosphate to 3-hydroxy-2-oxo-4-phosphonooxybutanoate. The polypeptide is Erythronate-4-phosphate dehydrogenase (Photorhabdus laumondii subsp. laumondii (strain DSM 15139 / CIP 105565 / TT01) (Photorhabdus luminescens subsp. laumondii)).